Here is a 136-residue protein sequence, read N- to C-terminus: ATP synthase F(0) complex subunit C1, mitochondrial (136 aa).

A mitochondrion-targeting transit peptide spans 1 to 61; it reads MQTTGALLIS…REFQTSVVSR (61 aa). Residues 77–97 traverse the membrane as a helical segment; it reads VGVAGSGAGIGTVFGSLIIGY. K104 carries the post-translational modification N6,N6,N6-trimethyllysine. Residues 112-132 traverse the membrane as a helical segment; that stretch reads ILGFALFEAMGLFCLMVAFLI.

The protein belongs to the ATPase C chain family. As to quaternary structure, homooctamer; the c-ring consists of eight c subunits forming a circle, and each subunit adopts a hairpin shape. Component of the ATP synthase complex composed at least of ATP5F1A/subunit alpha, ATP5F1B/subunit beta, ATP5MC1/subunit c (homooctomer), MT-ATP6/subunit a, MT-ATP8/subunit 8, ATP5ME/subunit e, ATP5MF/subunit f, ATP5MG/subunit g, ATP5MK/subunit k, ATP5MJ/subunit j, ATP5F1C/subunit gamma, ATP5F1D/subunit delta, ATP5F1E/subunit epsilon, ATP5PF/subunit F6, ATP5PB/subunit b, ATP5PD/subunit d, ATP5PO/subunit OSCP. ATP synthase complex consists of a soluble F(1) head domain (subunits alpha(3) and beta(3)) - the catalytic core - and a membrane F(0) domain - the membrane proton channel (subunits c, a, 8, e, f, g, k and j). These two domains are linked by a central stalk (subunits gamma, delta, and epsilon) rotating inside the F1 region and a stationary peripheral stalk (subunits F6, b, d, and OSCP). Interacts with TMEM70 (homooligomer form); this interaction facilitates the oligomer formation of subunit c/ATP5MC1 (c-ring) and the c-ring membrane insertion and also protects ATP5MC1 against intramitochondrial proteolysis. In terms of processing, trimethylated by ATPSCKMT at Lys-104. Methylation is required for proper incorporation of the C subunit into the ATP synthase complex and mitochondrial respiration.

It localises to the mitochondrion membrane. It catalyses the reaction H(+)(in) = H(+)(out). Subunit c, of the mitochondrial membrane ATP synthase complex (F(1)F(0) ATP synthase or Complex V) that produces ATP from ADP in the presence of a proton gradient across the membrane which is generated by electron transport complexes of the respiratory chain. ATP synthase complex consist of a soluble F(1) head domain - the catalytic core - and a membrane F(1) domain - the membrane proton channel. These two domains are linked by a central stalk rotating inside the F(1) region and a stationary peripheral stalk. During catalysis, ATP synthesis in the catalytic domain of F(1) is coupled via a rotary mechanism of the central stalk subunits to proton translocation. With the subunit a (MT-ATP6), forms the proton-conducting channel in the F(0) domain, that contains two crucial half-channels (inlet and outlet) that facilitate proton movement from the mitochondrial intermembrane space (IMS) into the matrix. Protons are taken up via the inlet half-channel and released through the outlet half-channel, following a Grotthuss mechanism. The polypeptide is ATP synthase F(0) complex subunit C1, mitochondrial (Sus scrofa (Pig)).